Consider the following 78-residue polypeptide: Mandibular organ-inhibiting hormone 1 (78 aa).

3 cysteine pairs are disulfide-bonded: C7–C44, C24–C40, and C27–C53.

This sequence belongs to the arthropod CHH/MIH/GIH/VIH hormone family. In terms of tissue distribution, produced by the medulla terminalis X-organ in the eyestalks and transported to the sinus gland where it is stored and released.

The protein resides in the secreted. In terms of biological role, represses the synthesis of methyl farnesoate, the precursor of insect juvenile hormone III in the mandibular organ. The polypeptide is Mandibular organ-inhibiting hormone 1 (Cancer pagurus (Rock crab)).